A 425-amino-acid chain; its full sequence is Glutamyl-tRNA reductase (425 aa).

Substrate is bound by residues 47 to 50 (TCNR), serine 107, 112 to 114 (EDQ), and glutamine 118. Cysteine 48 (nucleophile) is an active-site residue. 187 to 192 (GAGHMA) is a binding site for NADP(+).

The protein belongs to the glutamyl-tRNA reductase family. As to quaternary structure, homodimer.

The catalysed reaction is (S)-4-amino-5-oxopentanoate + tRNA(Glu) + NADP(+) = L-glutamyl-tRNA(Glu) + NADPH + H(+). The protein operates within porphyrin-containing compound metabolism; protoporphyrin-IX biosynthesis; 5-aminolevulinate from L-glutamyl-tRNA(Glu): step 1/2. It functions in the pathway porphyrin-containing compound metabolism; chlorophyll biosynthesis. In terms of biological role, catalyzes the NADPH-dependent reduction of glutamyl-tRNA(Glu) to glutamate 1-semialdehyde (GSA). The protein is Glutamyl-tRNA reductase of Roseiflexus castenholzii (strain DSM 13941 / HLO8).